The following is a 588-amino-acid chain: Myc box-dependent-interacting protein 1 (588 aa).

The residue at position 2 (Ala2) is an N-acetylalanine. Residues 2-122 (AEMGSKGVTA…DYHQKLVDQA (121 aa)) are interaction with BIN2. Coiled-coil stretches lie at residues 15–42 (ASNV…TKDE) and 193–274 (HLVA…EKQH). A BAR domain is found at 29-276 (VLQKLGKADE…LVSLEKQHGS (248 aa)). The segment at 279 to 355 (FTVKAQPSDN…PKHTPSKEMK (77 aa)) is disordered. Phosphoserine occurs at positions 296, 298, and 304. Phosphothreonine is present on Thr308. Residues Ser324 and Ser332 each carry the phosphoserine modification. The segment at 379–422 (FEAPGPFSEQASLLDLDFEPLPPVASPVKAPTPSGQSIPWDLWE) is clathrin-binding. Positions 448–484 (PSQTAEPGPAQPAEASEVVGGAQEPGETAASEATSSS) are disordered. Positions 474–484 (ETAASEATSSS) are enriched in low complexity. The SH3 domain occupies 515–588 (GFMFKVQAQH…FPENFTERVQ (74 aa)).

As to quaternary structure, heterodimer with AMPH. Binds SH3GLB1. Interacts (via SH3 domain) with DNM1. Interacts with SYNJ1. Interacts (via SH3 domain) with DNM2. Interacts with CLTC. Interacts with AP2A2. Interacts with AP2B1. Interacts with MYC (via N-terminal transactivation domain); the interaction requires the integrity of the conserved MYC box regions 1 and 2. Interacts with BIN2. Interacts with SNX4. Interacts (via BAR domain) with BACE1. Binds (via BAR domain) F-actin. Phosphorylated by protein kinase C. As to expression, isoform 1 is expressed mainly in the brain. Isoform 2 is widely expressed.

The protein localises to the nucleus. Its subcellular location is the cytoplasm. It is found in the endosome. The protein resides in the cell membrane. It localises to the sarcolemma. The protein localises to the T-tubule. Functionally, is a key player in the control of plasma membrane curvature, and membrane shaping and remodeling. Required in muscle cells for the formation of T-tubules, tubular invaginations of the plasma membrane that function in depolarization-contraction coupling. Required in muscle cells for the formation of T-tubules, tubular invaginations of the plasma membrane that function in depolarization-contraction coupling. Is a negative regulator of endocytosis. Is also involved in the regulation of intracellular vesicles sorting, modulation of BACE1 trafficking and the control of amyloid-beta production. In neuronal circuits, endocytosis regulation may influence the internalization of PHF-tau aggregates. May be involved in the regulation of MYC activity and the control cell proliferation. This chain is Myc box-dependent-interacting protein 1 (Bin1), found in Mus musculus (Mouse).